Here is a 219-residue protein sequence, read N- to C-terminus: Thymidylate kinase (219 aa).

Residue 10–17 coordinates ATP; that stretch reads GLEGAGKT.

It belongs to the thymidylate kinase family.

It catalyses the reaction dTMP + ATP = dTDP + ADP. Functionally, phosphorylation of dTMP to form dTDP in both de novo and salvage pathways of dTTP synthesis. In Pectobacterium carotovorum subsp. carotovorum (strain PC1), this protein is Thymidylate kinase.